Reading from the N-terminus, the 303-residue chain is tRNA dimethylallyltransferase (303 aa).

9–16 contributes to the ATP binding site; sequence GPTAVGKT. Position 11–16 (11–16) interacts with substrate; it reads TAVGKT. The tract at residues 34–37 is interaction with substrate tRNA; it reads DSRQ.

The protein belongs to the IPP transferase family. As to quaternary structure, monomer. It depends on Mg(2+) as a cofactor.

The catalysed reaction is adenosine(37) in tRNA + dimethylallyl diphosphate = N(6)-dimethylallyladenosine(37) in tRNA + diphosphate. Its function is as follows. Catalyzes the transfer of a dimethylallyl group onto the adenine at position 37 in tRNAs that read codons beginning with uridine, leading to the formation of N6-(dimethylallyl)adenosine (i(6)A). This chain is tRNA dimethylallyltransferase, found in Petrotoga mobilis (strain DSM 10674 / SJ95).